The sequence spans 355 residues: Tetraacyldisaccharide 4'-kinase (355 aa).

49–56 is an ATP binding site; the sequence is TAGGTGKT.

Belongs to the LpxK family.

It catalyses the reaction a lipid A disaccharide + ATP = a lipid IVA + ADP + H(+). Its pathway is glycolipid biosynthesis; lipid IV(A) biosynthesis; lipid IV(A) from (3R)-3-hydroxytetradecanoyl-[acyl-carrier-protein] and UDP-N-acetyl-alpha-D-glucosamine: step 6/6. Functionally, transfers the gamma-phosphate of ATP to the 4'-position of a tetraacyldisaccharide 1-phosphate intermediate (termed DS-1-P) to form tetraacyldisaccharide 1,4'-bis-phosphate (lipid IVA). This is Tetraacyldisaccharide 4'-kinase from Chlorobium luteolum (strain DSM 273 / BCRC 81028 / 2530) (Pelodictyon luteolum).